Reading from the N-terminus, the 464-residue chain is Juvenile hormone epoxide hydrolase 1 (464 aa).

The helical transmembrane segment at 7-27 (MLIFAAIAGIAVLYYQITKEL) threads the bilayer. Asp224 functions as the Nucleophile in the catalytic mechanism. Tyr370 functions as the Proton donor in the catalytic mechanism. Residue His427 is the Proton acceptor of the active site.

The protein belongs to the peptidase S33 family. In terms of tissue distribution, developing oocytes, fat body and midgut epithelium of adults.

It localises to the microsome membrane. Its subcellular location is the endoplasmic reticulum membrane. The catalysed reaction is cis-stilbene oxide + H2O = (1R,2R)-hydrobenzoin. It carries out the reaction 1-(4-methoxyphenyl)-N-methyl-N-[(3-methyloxetan-3-yl)methyl]methanamine + H2O = 2-{[(4-methoxybenzyl)(methyl)amino]methyl}-2-methylpropane-1,3-diol. In terms of biological role, catalyzes juvenile hormone hydrolysis. The polypeptide is Juvenile hormone epoxide hydrolase 1 (Ctenocephalides felis (Cat flea)).